A 521-amino-acid chain; its full sequence is Ribonuclease Y (521 aa).

The helical transmembrane segment at 5–25 (MMTMILAVIAAAIGFLIGNLL) threads the bilayer. Residues 211-271 (TVSVVALPSD…VRREVAKLSL (61 aa)) form the KH domain. The HD domain maps to 337–430 (VYQHSLEVAF…VQAADALSGA (94 aa)).

Belongs to the RNase Y family.

The protein resides in the cell membrane. Endoribonuclease that initiates mRNA decay. The chain is Ribonuclease Y from Geotalea uraniireducens (strain Rf4) (Geobacter uraniireducens).